Here is a 125-residue protein sequence, read N- to C-terminus: Large ribosomal subunit protein bL12 (125 aa).

Belongs to the bacterial ribosomal protein bL12 family. In terms of assembly, homodimer. Part of the ribosomal stalk of the 50S ribosomal subunit. Forms a multimeric L10(L12)X complex, where L10 forms an elongated spine to which 2 to 4 L12 dimers bind in a sequential fashion. Binds GTP-bound translation factors.

Its function is as follows. Forms part of the ribosomal stalk which helps the ribosome interact with GTP-bound translation factors. Is thus essential for accurate translation. The sequence is that of Large ribosomal subunit protein bL12 from Granulibacter bethesdensis (strain ATCC BAA-1260 / CGDNIH1).